The following is a 195-amino-acid chain: Recombination protein RecR (195 aa).

Residues 53–68 form a C4-type zinc finger; sequence CPVCFNIDVKSPCSIC. A Toprim domain is found at 76–171; the sequence is QLLCIVEELG…KVTRLACGIP (96 aa).

The protein belongs to the RecR family.

Its function is as follows. May play a role in DNA repair. It seems to be involved in an RecBC-independent recombinational process of DNA repair. It may act with RecF and RecO. The polypeptide is Recombination protein RecR (Ehrlichia chaffeensis (strain ATCC CRL-10679 / Arkansas)).